Reading from the N-terminus, the 118-residue chain is Small ribosomal subunit protein uS13 (118 aa).

Residues 96–118 (PLRGQRTRTNARTRKGPRKAIKK) form a disordered region.

Belongs to the universal ribosomal protein uS13 family. Part of the 30S ribosomal subunit. Forms a loose heterodimer with protein S19. Forms two bridges to the 50S subunit in the 70S ribosome.

Its function is as follows. Located at the top of the head of the 30S subunit, it contacts several helices of the 16S rRNA. In the 70S ribosome it contacts the 23S rRNA (bridge B1a) and protein L5 of the 50S subunit (bridge B1b), connecting the 2 subunits; these bridges are implicated in subunit movement. Contacts the tRNAs in the A and P-sites. In Stenotrophomonas maltophilia (strain K279a), this protein is Small ribosomal subunit protein uS13.